The following is a 361-amino-acid chain: D-alanine--D-alanine ligase (361 aa).

Residues 139–336 (KLLLKEKEIS…FSQIIDNMIN (198 aa)) enclose the ATP-grasp domain. Residue 167–222 (EKNLGYPMIVKPARLGSSIGVSKVVDRKNFEEAVKNVLLFDNKVLVEKWINAREIN) participates in ATP binding. Positions 296, 307, and 309 each coordinate Mg(2+).

This sequence belongs to the D-alanine--D-alanine ligase family. Mg(2+) serves as cofactor. Requires Mn(2+) as cofactor.

It localises to the cytoplasm. The catalysed reaction is 2 D-alanine + ATP = D-alanyl-D-alanine + ADP + phosphate + H(+). Its pathway is cell wall biogenesis; peptidoglycan biosynthesis. Functionally, cell wall formation. The sequence is that of D-alanine--D-alanine ligase from Thermosipho melanesiensis (strain DSM 12029 / CIP 104789 / BI429).